The following is a 454-amino-acid chain: Flagellum-specific ATP synthase (454 aa).

182-189 is a binding site for ATP; it reads ASSGLGKS.

It belongs to the ATPase alpha/beta chains family.

The protein resides in the cytoplasm. The catalysed reaction is ATP + H2O + 4 H(+)(in) = ADP + phosphate + 5 H(+)(out). Its function is as follows. Probable catalytic subunit of a protein translocase for flagellum-specific export, or a proton translocase involved in local circuits at the flagellum. May be involved in a specialized protein export pathway that proceeds without signal peptide cleavage. The chain is Flagellum-specific ATP synthase (fliI) from Buchnera aphidicola subsp. Baizongia pistaciae (strain Bp).